Here is a 138-residue protein sequence, read N- to C-terminus: Acidic phospholipase A2 1 (138 aa).

Positions 1–16 (MRTLWIVAVWLMGVEG) are cleaved as a signal peptide. Disulfide bonds link Cys-42-Cys-131, Cys-44-Cys-60, Cys-59-Cys-111, Cys-65-Cys-138, Cys-66-Cys-104, Cys-73-Cys-97, and Cys-91-Cys-102. Positions 43, 45, and 47 each coordinate Ca(2+). The active site involves His-63. Asp-64 contacts Ca(2+). Asp-105 is a catalytic residue.

In terms of assembly, monomer. It depends on Ca(2+) as a cofactor. Expressed by the venom gland.

The protein localises to the secreted. It catalyses the reaction a 1,2-diacyl-sn-glycero-3-phosphocholine + H2O = a 1-acyl-sn-glycero-3-phosphocholine + a fatty acid + H(+). In terms of biological role, snake venom phospholipase that inhibits ADP- and collagen-induced human platelet aggregation. This inhibition is completely inhibited by abolition of catalytic activity in case of collagen as inducer and partially inhibited in case of ADP as inducer. PLA2 catalyzes the calcium-dependent hydrolysis of the 2-acyl groups in 3-sn-phosphoglycerides. The protein is Acidic phospholipase A2 1 of Macrovipera lebetinus (Levantine viper).